The chain runs to 528 residues: Phosphoenolpyruvate carboxykinase (ATP) (528 aa).

Substrate is bound by residues arginine 56, tyrosine 192, and lysine 198. Residues lysine 198, histidine 217, and 233 to 241 each bind ATP; that span reads GLSGTGKTT. Mn(2+) is bound by residues lysine 198 and histidine 217. Aspartate 254 is a binding site for Mn(2+). 3 residues coordinate ATP: glutamate 282, arginine 319, and threonine 444. Arginine 319 is a binding site for substrate.

Belongs to the phosphoenolpyruvate carboxykinase (ATP) family. It depends on Mn(2+) as a cofactor.

Its subcellular location is the cytoplasm. It catalyses the reaction oxaloacetate + ATP = phosphoenolpyruvate + ADP + CO2. It functions in the pathway carbohydrate biosynthesis; gluconeogenesis. Involved in the gluconeogenesis. Catalyzes the conversion of oxaloacetate (OAA) to phosphoenolpyruvate (PEP) through direct phosphoryl transfer between the nucleoside triphosphate and OAA. In Bacillus cytotoxicus (strain DSM 22905 / CIP 110041 / 391-98 / NVH 391-98), this protein is Phosphoenolpyruvate carboxykinase (ATP).